Here is a 177-residue protein sequence, read N- to C-terminus: 3-hydroxydecanoyl-[acyl-carrier-protein] dehydratase (177 aa).

H76 is a catalytic residue.

The protein belongs to the thioester dehydratase family. FabA subfamily. Homodimer.

It is found in the cytoplasm. It catalyses the reaction a (3R)-hydroxyacyl-[ACP] = a (2E)-enoyl-[ACP] + H2O. The catalysed reaction is (3R)-hydroxydecanoyl-[ACP] = (2E)-decenoyl-[ACP] + H2O. The enzyme catalyses (2E)-decenoyl-[ACP] = (3Z)-decenoyl-[ACP]. The protein operates within lipid metabolism; fatty acid biosynthesis. In terms of biological role, necessary for the introduction of cis unsaturation into fatty acids. Catalyzes the dehydration of (3R)-3-hydroxydecanoyl-ACP to E-(2)-decenoyl-ACP and then its isomerization to Z-(3)-decenoyl-ACP. Can catalyze the dehydratase reaction for beta-hydroxyacyl-ACPs with saturated chain lengths up to 16:0, being most active on intermediate chain length. This Actinobacillus succinogenes (strain ATCC 55618 / DSM 22257 / CCUG 43843 / 130Z) protein is 3-hydroxydecanoyl-[acyl-carrier-protein] dehydratase.